A 247-amino-acid chain; its full sequence is Segregation and condensation protein A (247 aa).

This sequence belongs to the ScpA family. In terms of assembly, component of a cohesin-like complex composed of ScpA, ScpB and the Smc homodimer, in which ScpA and ScpB bind to the head domain of Smc. The presence of the three proteins is required for the association of the complex with DNA.

The protein localises to the cytoplasm. In terms of biological role, participates in chromosomal partition during cell division. May act via the formation of a condensin-like complex containing Smc and ScpB that pull DNA away from mid-cell into both cell halves. In Lactobacillus gasseri (strain ATCC 33323 / DSM 20243 / BCRC 14619 / CIP 102991 / JCM 1131 / KCTC 3163 / NCIMB 11718 / NCTC 13722 / AM63), this protein is Segregation and condensation protein A.